A 228-amino-acid chain; its full sequence is RNA chaperone ProQ (228 aa).

The disordered stretch occupies residues 105–178 (EAKARVQAQR…REEQHTPVSD (74 aa)). 2 stretches are compositionally biased toward basic and acidic residues: residues 117–136 (QQAKKREAAAAAGEKEDAPR) and 146–173 (RRKETTPRTPRAEKPAAKAPRAPREEQH).

This sequence belongs to the ProQ family.

It localises to the cytoplasm. In terms of biological role, RNA chaperone with significant RNA binding, RNA strand exchange and RNA duplexing activities. May regulate ProP activity through an RNA-based, post-transcriptional mechanism. The sequence is that of RNA chaperone ProQ from Citrobacter koseri (strain ATCC BAA-895 / CDC 4225-83 / SGSC4696).